The chain runs to 273 residues: Type III pantothenate kinase (273 aa).

5-12 (DVGNSHVV) is an ATP binding site. 112–115 (GTDL) contacts substrate. The active-site Proton acceptor is Asp114. Position 134 (Asp134) interacts with K(+). Thr137 provides a ligand contact to ATP. Substrate is bound at residue Thr189.

Belongs to the type III pantothenate kinase family. In terms of assembly, homodimer. NH4(+) serves as cofactor. It depends on K(+) as a cofactor.

It is found in the cytoplasm. The enzyme catalyses (R)-pantothenate + ATP = (R)-4'-phosphopantothenate + ADP + H(+). Its pathway is cofactor biosynthesis; coenzyme A biosynthesis; CoA from (R)-pantothenate: step 1/5. Its function is as follows. Catalyzes the phosphorylation of pantothenate (Pan), the first step in CoA biosynthesis. This chain is Type III pantothenate kinase, found in Treponema pallidum subsp. pallidum (strain SS14).